The following is a 769-amino-acid chain: Serine protease HtrA-like (769 aa).

Residues 1-20 (MDIGKKHVIPKSQYRRKRRE) show a composition bias toward basic residues. Disordered stretches follow at residues 1-287 (MDIG…DKDN) and 324-390 (EDKH…KGRA). 2 stretches are compositionally biased toward basic and acidic residues: residues 21–64 (FFHN…ERFK) and 71–108 (LEQR…DVSK). Residues 126 to 137 (YEQNSEATLSTK) show a composition bias toward polar residues. A compositionally biased stretch (basic and acidic residues) spans 138 to 186 (STDKVESTEMRKLSSDKNKVGHEEQHVLSKPSEHDKETRIDSESSRTDS). Positions 247-262 (QQSQNEQTKTYTYGDS) are enriched in polar residues. Basic and acidic residues predominate over residues 264–287 (QNDKSNHENDLSHHTPSISDDKDN). Polar residues predominate over residues 331–347 (ADSSETVGYQSQSTASH). Residues 348 to 364 (RSTEKRNISINDHDKLN) show a composition bias toward basic and acidic residues. A compositionally biased stretch (polar residues) spans 365–390 (GQKTNTKTSANNNQKKATSKLNKGRA). Residues 410-430 (LVILMGIIILIVILNAIFNNV) traverse the membrane as a helical segment. Residues H504, D534, and S619 each act as charge relay system in the active site. The PDZ domain maps to 680–733 (IASLNSFERQAVKLPGKVKNGVVVDQVDNNGLADQSGLKKGDVITELDGKLLED).

It belongs to the peptidase S1C family.

It localises to the cell membrane. The sequence is that of Serine protease HtrA-like from Staphylococcus aureus (strain N315).